The primary structure comprises 2059 residues: DNA polymerase theta (2059 aa).

Residues 25-45 (DKENAQPGNGNIQVQSAGNEV) are disordered. A compositionally biased stretch (polar residues) spans 30–45 (QPGNGNIQVQSAGNEV). A Helicase ATP-binding domain is found at 243-416 (PRLLFEHCNL…WLDAELYITN (174 aa)). Residue 256–263 (APTSAGKT) coordinates ATP. Positions 357–360 (DEVH) match the DEAH box motif. The Helicase C-terminal domain occupies 464 to 666 (CIETLLEGCS…HLKRALLEVI (203 aa)). Disordered regions lie at residues 1052–1073 (PPVKRKLSIEENGTANSQKNPR), 1168–1190 (PQLANEEKPSTSQSARRKLVNEG), 1204–1274 (QRTQ…SRKV), and 1330–1372 (PHAS…GVSS). Polar residues predominate over residues 1062-1071 (ENGTANSQKN). Residues 1213-1274 (KDQPIQASRS…NANRTASRKV (62 aa)) show a composition bias toward polar residues. A compositionally biased stretch (basic and acidic residues) spans 1355-1365 (REIEIDLESKN).

It belongs to the DNA polymerase type-A family. It depends on Mg(2+) as a cofactor. In adult males, cleaved to produce a 100 kDa form. Expressed in ovaries (at protein level).

It is found in the nucleus. It catalyses the reaction DNA(n) + a 2'-deoxyribonucleoside 5'-triphosphate = DNA(n+1) + diphosphate. Resistant to aphidicolin, but sensitive to dideoxythymindine triphosphate (ddTTP) and N-ethyl malemide (NEM). Multifunctional protein with both DNA polymerase and ATPase activities. Might have 3' to 5' exonuclease activity. Plays a role in different DNA repair pathways such as DNA strand cross-link repair and microhomology-mediated end-joining (MMEJ), an alternative non-homologous end-joining (NHEJ) machinery triggered in response to double-strand breaks. MMEJ is an error-prone repair pathway that produces deletions of sequences from the strand being repaired and promotes genomic rearrangements, such as telomere fusions. Utilizes short microhomologies present in partially and fully single-stranded DNA (ssDNA) as primers for DNA synthesis. Prefers poly(dA)/oligo(dT) as a template-primer. The ATPase activity is necessary during interstrand cross-link (ICL) repair and has a critical role in generating templated insertions during MMEJ. Necessary for processing DNA damage induced by oxygen and N-ethylation. In follicle cells, contributes to double-strand break repair at physiological rereplication forks necessary for survival of fertilized eggs. The sequence is that of DNA polymerase theta from Drosophila melanogaster (Fruit fly).